A 454-amino-acid polypeptide reads, in one-letter code: Probable xylan O-acetyltransferase 9 (454 aa).

Over 1-15 the chain is Cytoplasmic; the sequence is MKAPPPPSPVAKRAR. The chain crosses the membrane as a helical; Signal-anchor for type II membrane protein span at residues 16–36; the sequence is VSPFVFLLVLFLLLFSFLYGE. The Lumenal portion of the chain corresponds to 37-454; that stretch reads DLKELLGSQA…ELLYTKLFYP (418 aa). 4 disulfides stabilise this stretch: Cys101/Cys152, Cys123/Cys188, Cys132/Cys435, and Cys352/Cys431. The short motif at 175-177 is the GDS motif element; that stretch reads GDS. Ser177 acts as the Nucleophile in catalysis. 3 N-linked (GlcNAc...) asparagine glycosylation sites follow: Asn219, Asn293, and Asn394. The Proton donor role is filled by Asp430. The short motif at 430–433 is the DXXH motif element; the sequence is DCVH. His433 acts as the Proton acceptor in catalysis.

The protein belongs to the PC-esterase family. TBL subfamily.

Its subcellular location is the golgi apparatus membrane. Probable xylan acetyltransferase required for 2-O- and 3-O-monoacetylation of xylosyl residues in xylan. Possesses extremely low activity in vitro. The sequence is that of Probable xylan O-acetyltransferase 9 from Oryza sativa subsp. japonica (Rice).